Reading from the N-terminus, the 122-residue chain is Large ribosomal subunit protein uL14 (122 aa).

The protein belongs to the universal ribosomal protein uL14 family. Part of the 50S ribosomal subunit. Forms a cluster with proteins L3 and L19. In the 70S ribosome, L14 and L19 interact and together make contacts with the 16S rRNA in bridges B5 and B8.

In terms of biological role, binds to 23S rRNA. Forms part of two intersubunit bridges in the 70S ribosome. The chain is Large ribosomal subunit protein uL14 from Bifidobacterium longum (strain DJO10A).